Here is a 142-residue protein sequence, read N- to C-terminus: Ribosome-binding factor A (142 aa).

Belongs to the RbfA family. Monomer. Binds 30S ribosomal subunits, but not 50S ribosomal subunits or 70S ribosomes.

It is found in the cytoplasm. Functionally, one of several proteins that assist in the late maturation steps of the functional core of the 30S ribosomal subunit. Associates with free 30S ribosomal subunits (but not with 30S subunits that are part of 70S ribosomes or polysomes). Required for efficient processing of 16S rRNA. May interact with the 5'-terminal helix region of 16S rRNA. The polypeptide is Ribosome-binding factor A (Leifsonia xyli subsp. xyli (strain CTCB07)).